Reading from the N-terminus, the 314-residue chain is Putative 4-hydroxy-2-oxoglutarate aldolase, mitochondrial (314 aa).

Position 50-51 (50-51 (TN)) interacts with substrate. The active-site Schiff-base intermediate with substrate is lysine 171.

The protein belongs to the DapA family.

It catalyses the reaction (4S)-4-hydroxy-2-oxoglutarate = glyoxylate + pyruvate. It carries out the reaction (4R)-4-hydroxy-2-oxoglutarate = glyoxylate + pyruvate. Its function is as follows. May catalyze the final step in the metabolic pathway of hydroxyproline. In Coccidioides immitis (strain RS) (Valley fever fungus), this protein is Putative 4-hydroxy-2-oxoglutarate aldolase, mitochondrial.